The primary structure comprises 536 residues: Multicopper oxidase CueO (536 aa).

A signal peptide (tat-type signal) is located at residues 1-28 (MLRRDFLKYSVALGVASALPLWSRAAFA). Plastocyanin-like domains lie at 53–165 (KAGQ…IEDD), 229–295 (GWLR…AFDL), and 424–536 (FHNA…GFTV). 4 residues coordinate Cu cation: histidine 101, histidine 103, histidine 141, and histidine 143. Positions 463, 466, 468, 519, 520, 521, and 525 each coordinate Cu cation.

It belongs to the multicopper oxidase family. As to quaternary structure, monomer. Cu cation is required as a cofactor. In terms of processing, predicted to be exported by the Tat system. The position of the signal peptide cleavage has not been experimentally proven.

Its subcellular location is the periplasm. It carries out the reaction 4 Cu(+) + O2 + 4 H(+) = 4 Cu(2+) + 2 H2O. Functionally, multicopper oxidase involved in copper homeostasis and copper tolerance under both aerobic and anaerobic conditions. Is responsible for the oxidation of Cu(+) to the less harmful Cu(2+) in the periplasm, thereby preventing Cu(+) from entering the cytoplasm. This is Multicopper oxidase CueO (cueO) from Salmonella typhimurium (strain LT2 / SGSC1412 / ATCC 700720).